The chain runs to 132 residues: Small ribosomal subunit protein uS8 (132 aa).

The protein belongs to the universal ribosomal protein uS8 family. As to quaternary structure, part of the 30S ribosomal subunit. Contacts proteins S5 and S12.

Functionally, one of the primary rRNA binding proteins, it binds directly to 16S rRNA central domain where it helps coordinate assembly of the platform of the 30S subunit. This chain is Small ribosomal subunit protein uS8, found in Leifsonia xyli subsp. xyli (strain CTCB07).